We begin with the raw amino-acid sequence, 245 residues long: Ribonuclease PH (245 aa).

Phosphate contacts are provided by residues arginine 87 and 125 to 127 (GTR).

This sequence belongs to the RNase PH family. As to quaternary structure, homohexameric ring arranged as a trimer of dimers.

The catalysed reaction is tRNA(n+1) + phosphate = tRNA(n) + a ribonucleoside 5'-diphosphate. In terms of biological role, phosphorolytic 3'-5' exoribonuclease that plays an important role in tRNA 3'-end maturation. Removes nucleotide residues following the 3'-CCA terminus of tRNAs; can also add nucleotides to the ends of RNA molecules by using nucleoside diphosphates as substrates, but this may not be physiologically important. Probably plays a role in initiation of 16S rRNA degradation (leading to ribosome degradation) during starvation. The sequence is that of Ribonuclease PH from Streptomyces coelicolor (strain ATCC BAA-471 / A3(2) / M145).